The following is a 1529-amino-acid chain: ABC multidrug transporter AFR2 (1529 aa).

Positions 1–10 (MAFAGVGQGL) are enriched in gly residues. A disordered region spans residues 1-21 (MAFAGVGQGLGTYDRTEQTSG). In terms of domain architecture, ABC transporter 1 spans 144 to 394 (GALRDLISNR…FVDMGFHCPS (251 aa)). N-linked (GlcNAc...) asparagine glycans are attached at residues Asn235 and Asn318. Transmembrane regions (helical) follow at residues 505–525 (LTLTQLFGNFIMALIIGSVFY), 539–559 (ALLFFAILMSAFGSALEILIL), 589–609 (IPYKVINCIIFSLTLYFMTNL), 614–634 (GPYFFFMLISFTLTMVMSMLF), and 648–668 (LAPAALLILGLVMYTGFAVNV). Asn742 is a glycosylation site (N-linked (GlcNAc...) asparagine). The helical transmembrane segment at 757–777 (GILIGFFLFFTAIYMTATEFI) threads the bilayer. Residues 845–1087 (FSWKDVVYDI…ILIDYFEKNG (243 aa)) enclose the ABC transporter 2 domain. 881-888 (GVSGAGKT) is an ATP binding site. 5 consecutive transmembrane segments (helical) span residues 1193–1213 (YIWSKAALCALSALFIGFSFF), 1227–1247 (FSVFMMFTIFGQLTQQIMPNF), 1268–1288 (IFILSNIVAEIPWAILMGAVI), 1314–1334 (LMFLYIEMFLIFNATFAIMIV), and 1353–1373 (MCLIFCGVLAPPSSLPGFWMF). N-linked (GlcNAc...) asparagine glycosylation is present at Asn1434. Residues 1465–1485 (FGLLWAYVVFNIIAAVGIYWL) traverse the membrane as a helical segment. Residues 1493–1529 (GKEQASEPEGVQEKLVPAQSSEKKRESVSRGSESTAA) form a disordered region.

The protein belongs to the ABC transporter superfamily. ABCG family. PDR (TC 3.A.1.205) subfamily.

Its subcellular location is the cell membrane. The catalysed reaction is itraconazole(in) + ATP + H2O = itraconazole(out) + ADP + phosphate + H(+). The enzyme catalyses voriconazole(in) + ATP + H2O = voriconazole(out) + ADP + phosphate + H(+). It catalyses the reaction fluconazole(in) + ATP + H2O = fluconazole(out) + ADP + phosphate + H(+). Its function is as follows. Pleiotropic ABC efflux transporter that confers resistance to structurally and functionally unrelated compounds including azoles such as fluconazole (FLC), itraconazole (ITC), posaconazole (POS), and voriconazole (VRC). In Cryptococcus neoformans var. grubii serotype A (strain H99 / ATCC 208821 / CBS 10515 / FGSC 9487) (Filobasidiella neoformans var. grubii), this protein is ABC multidrug transporter AFR2.